Consider the following 343-residue polypeptide: Selenide, water dikinase (343 aa).

Residue cysteine 15 is part of the active site. Residues lysine 18 and 46–48 each bind ATP; that span reads NKD. Mg(2+) is bound at residue aspartate 49. ATP contacts are provided by residues aspartate 66, aspartate 89, and 137–139; that span reads GHS. Aspartate 89 lines the Mg(2+) pocket. Aspartate 225 is a Mg(2+) binding site.

It belongs to the selenophosphate synthase 1 family. Class I subfamily. Homodimer. It depends on Mg(2+) as a cofactor.

It carries out the reaction hydrogenselenide + ATP + H2O = selenophosphate + AMP + phosphate + 2 H(+). Functionally, synthesizes selenophosphate from selenide and ATP. This is Selenide, water dikinase from Sulfurovum sp. (strain NBC37-1).